A 71-amino-acid polypeptide reads, in one-letter code: Small ribosomal subunit protein bS21 (71 aa).

Belongs to the bacterial ribosomal protein bS21 family.

In Buchnera aphidicola subsp. Schizaphis graminum (strain Sg), this protein is Small ribosomal subunit protein bS21.